The primary structure comprises 100 residues: Large ribosomal subunit protein eL36B (100 aa).

Belongs to the eukaryotic ribosomal protein eL36 family. In terms of assembly, component of the large ribosomal subunit (LSU). Mature yeast ribosomes consist of a small (40S) and a large (60S) subunit. The 40S small subunit contains 1 molecule of ribosomal RNA (18S rRNA) and 33 different proteins (encoded by 57 genes). The large 60S subunit contains 3 rRNA molecules (25S, 5.8S and 5S rRNA) and 46 different proteins (encoded by 81 genes).

The protein resides in the cytoplasm. Component of the ribosome, a large ribonucleoprotein complex responsible for the synthesis of proteins in the cell. The small ribosomal subunit (SSU) binds messenger RNAs (mRNAs) and translates the encoded message by selecting cognate aminoacyl-transfer RNA (tRNA) molecules. The large subunit (LSU) contains the ribosomal catalytic site termed the peptidyl transferase center (PTC), which catalyzes the formation of peptide bonds, thereby polymerizing the amino acids delivered by tRNAs into a polypeptide chain. The nascent polypeptides leave the ribosome through a tunnel in the LSU and interact with protein factors that function in enzymatic processing, targeting, and the membrane insertion of nascent chains at the exit of the ribosomal tunnel. The chain is Large ribosomal subunit protein eL36B from Saccharomyces cerevisiae (strain ATCC 204508 / S288c) (Baker's yeast).